A 52-amino-acid polypeptide reads, in one-letter code: Large ribosomal subunit protein bL32c (52 aa).

The protein belongs to the bacterial ribosomal protein bL32 family.

Its subcellular location is the plastid. The protein resides in the chloroplast. The chain is Large ribosomal subunit protein bL32c from Citrus sinensis (Sweet orange).